A 196-amino-acid polypeptide reads, in one-letter code: Putative NADH dehydrogenase/NAD(P)H nitroreductase Smlt0482 (196 aa).

This sequence belongs to the nitroreductase family. HadB/RutE subfamily. Requires FMN as cofactor.

The chain is Putative NADH dehydrogenase/NAD(P)H nitroreductase Smlt0482 from Stenotrophomonas maltophilia (strain K279a).